Consider the following 266-residue polypeptide: Orotidine 5'-phosphate decarboxylase (266 aa).

Substrate is bound by residues Asp38, 60-62, 92-101, Tyr218, and Arg236; these read KTH and DRKFADIGNT. The active-site Proton donor is Lys94.

Belongs to the OMP decarboxylase family.

The catalysed reaction is orotidine 5'-phosphate + H(+) = UMP + CO2. Its pathway is pyrimidine metabolism; UMP biosynthesis via de novo pathway; UMP from orotate: step 2/2. The chain is Orotidine 5'-phosphate decarboxylase (URA3) from Candida maltosa (Yeast).